The chain runs to 56 residues: MTQVTVGENEGIESALRRFKRQVSKAGIFADLKRLRHHETPVEKYKRKLQQRRRRR.

Belongs to the bacterial ribosomal protein bS21 family.

The protein is Small ribosomal subunit protein bS21 of Synechococcus sp. (strain RCC307).